The chain runs to 237 residues: Thiamine-phosphate synthase (237 aa).

4-amino-2-methyl-5-(diphosphooxymethyl)pyrimidine-binding positions include 41–45 (QLRDK) and Asn73. Positions 74 and 93 each coordinate Mg(2+). A 4-amino-2-methyl-5-(diphosphooxymethyl)pyrimidine-binding site is contributed by Ser112. Position 143–145 (143–145 (TPT)) interacts with 2-[(2R,5Z)-2-carboxy-4-methylthiazol-5(2H)-ylidene]ethyl phosphate. Residue Lys146 participates in 4-amino-2-methyl-5-(diphosphooxymethyl)pyrimidine binding. Gly192 provides a ligand contact to 2-[(2R,5Z)-2-carboxy-4-methylthiazol-5(2H)-ylidene]ethyl phosphate.

It belongs to the thiamine-phosphate synthase family. The cofactor is Mg(2+).

The catalysed reaction is 2-[(2R,5Z)-2-carboxy-4-methylthiazol-5(2H)-ylidene]ethyl phosphate + 4-amino-2-methyl-5-(diphosphooxymethyl)pyrimidine + 2 H(+) = thiamine phosphate + CO2 + diphosphate. It catalyses the reaction 2-(2-carboxy-4-methylthiazol-5-yl)ethyl phosphate + 4-amino-2-methyl-5-(diphosphooxymethyl)pyrimidine + 2 H(+) = thiamine phosphate + CO2 + diphosphate. It carries out the reaction 4-methyl-5-(2-phosphooxyethyl)-thiazole + 4-amino-2-methyl-5-(diphosphooxymethyl)pyrimidine + H(+) = thiamine phosphate + diphosphate. It functions in the pathway cofactor biosynthesis; thiamine diphosphate biosynthesis; thiamine phosphate from 4-amino-2-methyl-5-diphosphomethylpyrimidine and 4-methyl-5-(2-phosphoethyl)-thiazole: step 1/1. Functionally, condenses 4-methyl-5-(beta-hydroxyethyl)thiazole monophosphate (THZ-P) and 2-methyl-4-amino-5-hydroxymethyl pyrimidine pyrophosphate (HMP-PP) to form thiamine monophosphate (TMP). The chain is Thiamine-phosphate synthase from Arthrobacter sp. (strain FB24).